The sequence spans 254 residues: 5-oxoprolinase subunit A (254 aa).

The protein belongs to the LamB/PxpA family. Forms a complex composed of PxpA, PxpB and PxpC.

The enzyme catalyses 5-oxo-L-proline + ATP + 2 H2O = L-glutamate + ADP + phosphate + H(+). In terms of biological role, catalyzes the cleavage of 5-oxoproline to form L-glutamate coupled to the hydrolysis of ATP to ADP and inorganic phosphate. This Acinetobacter baumannii (strain AB307-0294) protein is 5-oxoprolinase subunit A.